The chain runs to 129 residues: Large ribosomal subunit protein eL31 (129 aa).

Residues 1–46 are disordered; it reads MSQETTATKQEEQKTSELQQQKKEEQKPQQATTTTKEEKKTKPEKE. 2 stretches are compositionally biased toward basic and acidic residues: residues 9-27 and 35-46; these read KQEE…EEQK and TKEEKKTKPEKE.

It belongs to the eukaryotic ribosomal protein eL31 family.

This is Large ribosomal subunit protein eL31 (rpl31e) from Sulfolobus acidocaldarius (strain ATCC 33909 / DSM 639 / JCM 8929 / NBRC 15157 / NCIMB 11770).